We begin with the raw amino-acid sequence, 186 residues long: TATA-box-binding protein B (186 aa).

A run of 2 repeats spans residues 10–86 (IENV…FGDI) and 101–179 (VQNI…QDRL).

This sequence belongs to the TBP family.

Its function is as follows. General factor that plays a role in the activation of archaeal genes transcribed by RNA polymerase. Binds specifically to the TATA box promoter element which lies close to the position of transcription initiation. The polypeptide is TATA-box-binding protein B (tbpB1) (Halobacterium salinarum (strain ATCC 700922 / JCM 11081 / NRC-1) (Halobacterium halobium)).